The chain runs to 4451 residues: Gramicidin S synthase 2 (4451 aa).

Residues 467-1044 (DKTIHQLFTE…IQEISNYING (578 aa)) form a domain 1 (proline-activating) region. Carrier domains are found at residues 971–1046 (VPTN…NGAK), 2006–2081 (APSS…ADGQ), 3052–3127 (RPRT…EETD), and 4090–4165 (APRN…THQE). O-(pantetheine 4'-phosphoryl)serine is present on residues Ser-1006, Ser-2041, Ser-3087, and Ser-4125. The interval 1521-2080 (DHVAVGWKDQ…SALAQYIADG (560 aa)) is domain 2 (valine-activating). The tract at residues 2538–3135 (YATNKIFHEL…TDTEQYMAIQ (598 aa)) is domain 3 (ornithine-activating). The tract at residues 3591–4173 (IQELFEEQVK…QESENNVHQP (583 aa)) is domain 4 (leucine-activating).

This sequence belongs to the ATP-dependent AMP-binding enzyme family. As to quaternary structure, large multienzyme complex of GrsA and GrsB. Requires pantetheine 4'-phosphate as cofactor.

It functions in the pathway antibiotic biosynthesis; gramicidin S biosynthesis. Its function is as follows. This protein is a multifunctional enzyme, able to activate and polymerize the amino acids Pro, Val, Orn and Leu. Activation sites for these AA consist of individual domains. This Aneurinibacillus migulanus (Bacillus migulanus) protein is Gramicidin S synthase 2 (grsB).